The primary structure comprises 620 residues: Zinc finger protein GLIS1 (620 aa).

The disordered stretch occupies residues 108–132; it reads PLTGDLGGPSKRARPGPASTDSHEG. Residues 195 to 220 form a C2H2-type 1 zinc finger; it reads QACRWVDCCAAYEQQEELVRHIEKSH. The C2H2-type 2; atypical zinc-finger motif lies at 229–256; it reads FTCFWAGCVRRYKPFNARYKLLIHMRVH. 3 consecutive C2H2-type zinc fingers follow at residues 262-286, 292-316, and 322-346; these read NKCM…LRSH, YLCQ…QRTH, and YACQ…VKAH. Positions 340–356 match the Bipartite nuclear localization signal motif; it reads RKHVKAHSAKEQQVRKK. The tract at residues 414 to 515 is disordered; that stretch reads ASGLLPPAHD…PPLPSPQGYQ (102 aa). Residues 477–488 are compositionally biased toward low complexity; it reads SSQSHSPGGQPF. A compositionally biased stretch (pro residues) spans 489 to 510; sequence PTLPSKPSYPPFQSPPPPPLPS.

Belongs to the GLI C2H2-type zinc-finger protein family. In terms of assembly, interacts with KLF4. Interacts with POU5F1 and/or POU5F1B. Interacts with SOX2.

It localises to the nucleus. Its function is as follows. Acts both as a repressor and an activator of transcription. Binds to the consensus sequence 5'-GACCACCCAC-3'. By controlling the expression of genes involved in cell differentiation inhibits the lineage commitment of multipotent cells. Prevents, for instance, the differentiation of multipotent mesenchymal cells into adipocyte and osteoblast. The chain is Zinc finger protein GLIS1 from Homo sapiens (Human).